A 1131-amino-acid chain; its full sequence is ATP-dependent helicase FUN30 (1131 aa).

Positions 1 to 70 are disordered; that stretch reads MSGSHSNDED…HTSKPLPSGS (70 aa). A compositionally biased stretch (polar residues) spans 16-36; it reads PETSSPTKVASSSPLKPTSPT. The interval 76–111 is CUE-like region; the sequence is VNLAREFPDFSQTLVQAVFKSNSFNLQSARERLTRL. The interval 114–141 is disordered; the sequence is QRQNWTWNKNASPKKSETPPPVKKSLPL. Ser-232 carries the post-translational modification Phosphoserine. Disordered stretches follow at residues 242–273 and 327–350; these read KYGRHANDNDEEEEESMMTDDDDASGDDYTES and NDKDTEENASNKRKRRAAASANES. The segment covering 250–271 has biased composition (acidic residues); the sequence is NDEEEEESMMTDDDDASGDDYT. The residue at position 369 (Ser-369) is a Phosphoserine. Residues 400 to 533 form a disordered region; the sequence is DLMNLGEDDD…GDDDDDDDDE (134 aa). Acidic residues predominate over residues 405 to 416; it reads GEDDDDDNDDGN. Low complexity predominate over residues 417 to 432; sequence NDNNNSNNNNTAGADA. The segment covering 433 to 442 has biased composition (basic and acidic residues); that stretch reads TSKEKEDTKA. Residue Ser-451 is modified to Phosphoserine. Acidic residues predominate over residues 480-533; sequence EDEDDDVDLEAIDDELPQSEHEDDDYEEEDEDYNDEEEDVEYDDGDDDDDDDDE. The Helicase ATP-binding domain occupies 584 to 752; sequence NLLYQNKMSC…MSLLEFIMPN (169 aa). 597 to 604 contacts ATP; it reads DDMGLGKT. A DEGH box motif is present at residues 703–706; that stretch reads DEGH. Positions 953–1108 constitute a Helicase C-terminal domain; sequence ALKKLLKTII…EDKKSQDVLE (156 aa).

The protein belongs to the SNF2/RAD54 helicase family. As to quaternary structure, homodimer.

It localises to the nucleus. The protein localises to the chromosome. The catalysed reaction is ATP + H2O = ADP + phosphate + H(+). In terms of biological role, DNA helicase that possesses intrinsic ATP-dependent nucleosome-remodeling activity and is both required for DNA repair and heterochromatin organization. Promotes DNA end resection of double-strand breaks (DSBs) following DNA damage: probably acts by weakening histone DNA interactions in nucleosomes flanking DSBs, facilitating single-stranded DNA (ssDNA) production by the EXO1 and SGS1 machinery. Promotes gene silencing at heterochromatin by regulating the chromatin structure within or around silent loci. Also required for heterochromatin organization at centromeres. This chain is ATP-dependent helicase FUN30 (FUN30), found in Saccharomyces cerevisiae (strain ATCC 204508 / S288c) (Baker's yeast).